A 406-amino-acid chain; its full sequence is Inactive serine protease 35 (406 aa).

The signal sequence occupies residues 1–17 (MLLWLIIFVSGWTLSLG). A glycan (N-linked (GlcNAc...) asparagine) is linked at N87. The region spanning 121–401 (VYGTDSRFSI…ICLWIHGNAA (281 aa)) is the Peptidase S1 domain. A disulfide bridge connects residues C151 and C167. The span at 186–204 (LKMRNKGGRKKRRGSRRSR) shows a compositional bias: basic residues. The disordered stretch occupies residues 186 to 248 (LKMRNKGGRK…RPSFQWTRVK (63 aa)).

The protein belongs to the peptidase S1 family.

It localises to the secreted. The protein is Inactive serine protease 35 (Prss35) of Rattus norvegicus (Rat).